The chain runs to 234 residues: Leucyl/phenylalanyl-tRNA--protein transferase (234 aa).

It belongs to the L/F-transferase family.

The protein resides in the cytoplasm. It carries out the reaction N-terminal L-lysyl-[protein] + L-leucyl-tRNA(Leu) = N-terminal L-leucyl-L-lysyl-[protein] + tRNA(Leu) + H(+). It catalyses the reaction N-terminal L-arginyl-[protein] + L-leucyl-tRNA(Leu) = N-terminal L-leucyl-L-arginyl-[protein] + tRNA(Leu) + H(+). The catalysed reaction is L-phenylalanyl-tRNA(Phe) + an N-terminal L-alpha-aminoacyl-[protein] = an N-terminal L-phenylalanyl-L-alpha-aminoacyl-[protein] + tRNA(Phe). In terms of biological role, functions in the N-end rule pathway of protein degradation where it conjugates Leu, Phe and, less efficiently, Met from aminoacyl-tRNAs to the N-termini of proteins containing an N-terminal arginine or lysine. The chain is Leucyl/phenylalanyl-tRNA--protein transferase from Shigella sonnei (strain Ss046).